Consider the following 188-residue polypeptide: Putative protein SSX9 (188 aa).

In terms of domain architecture, KRAB-related spans 20-83; the sequence is KIQKAFDDIA…TGATDLQGND (64 aa). The tract at residues 114–165 is disordered; sequence KKPAEVGNDSKEVPEASGLQNDGKQLCPPGKPTTSEKINKASGPKRGKHAWT. Positions 115–127 are enriched in basic and acidic residues; that stretch reads KPAEVGNDSKEVP. Serine 123 carries the post-translational modification Phosphoserine. Over residues 156–165 the composition is skewed to basic residues; sequence GPKRGKHAWT.

It belongs to the SSX family. As to expression, not detected in any normal or tumor tissues.

Functionally, could act as a modulator of transcription. The protein is Putative protein SSX9 of Homo sapiens (Human).